Here is a 536-residue protein sequence, read N- to C-terminus: GMP synthase [glutamine-hydrolyzing] (536 aa).

Residues 4–206 (KILILDFGSQ…VLDICGARAD (203 aa)) form the Glutamine amidotransferase type-1 domain. Cys85 serves as the catalytic Nucleophile. Active-site residues include His180 and Glu182. The GMPS ATP-PPase domain maps to 207–404 (WIMGDYISEA…LGLPYHMVYR (198 aa)). 234–240 (SGGVDSS) contributes to the ATP binding site.

In terms of assembly, homodimer.

The catalysed reaction is XMP + L-glutamine + ATP + H2O = GMP + L-glutamate + AMP + diphosphate + 2 H(+). Its pathway is purine metabolism; GMP biosynthesis; GMP from XMP (L-Gln route): step 1/1. In terms of biological role, catalyzes the synthesis of GMP from XMP. The polypeptide is GMP synthase [glutamine-hydrolyzing] (Albidiferax ferrireducens (strain ATCC BAA-621 / DSM 15236 / T118) (Rhodoferax ferrireducens)).